Reading from the N-terminus, the 189-residue chain is Crossover junction endodeoxyribonuclease RuvC (189 aa).

Catalysis depends on residues Asp-7, Glu-68, and Asp-141. Mg(2+) contacts are provided by Asp-7, Glu-68, and Asp-141.

This sequence belongs to the RuvC family. Homodimer which binds Holliday junction (HJ) DNA. The HJ becomes 2-fold symmetrical on binding to RuvC with unstacked arms; it has a different conformation from HJ DNA in complex with RuvA. In the full resolvosome a probable DNA-RuvA(4)-RuvB(12)-RuvC(2) complex forms which resolves the HJ. Mg(2+) serves as cofactor.

It localises to the cytoplasm. It catalyses the reaction Endonucleolytic cleavage at a junction such as a reciprocal single-stranded crossover between two homologous DNA duplexes (Holliday junction).. Functionally, the RuvA-RuvB-RuvC complex processes Holliday junction (HJ) DNA during genetic recombination and DNA repair. Endonuclease that resolves HJ intermediates. Cleaves cruciform DNA by making single-stranded nicks across the HJ at symmetrical positions within the homologous arms, yielding a 5'-phosphate and a 3'-hydroxyl group; requires a central core of homology in the junction. The consensus cleavage sequence is 5'-(A/T)TT(C/G)-3'. Cleavage occurs on the 3'-side of the TT dinucleotide at the point of strand exchange. HJ branch migration catalyzed by RuvA-RuvB allows RuvC to scan DNA until it finds its consensus sequence, where it cleaves and resolves the cruciform DNA. This Chlorobium phaeovibrioides (strain DSM 265 / 1930) (Prosthecochloris vibrioformis (strain DSM 265)) protein is Crossover junction endodeoxyribonuclease RuvC.